An 835-amino-acid chain; its full sequence is Toll-like receptor 4 (835 aa).

An N-terminal signal peptide occupies residues 1 to 25 (MMPLLHLAGTLIMALFLSCLRPGSL). The Extracellular portion of the chain corresponds to 26–638 (NPCIEVLPNI…KTIISVSVVS (613 aa)). Cys-28 and Cys-39 are oxidised to a cystine. 3 N-linked (GlcNAc...) asparagine glycosylation sites follow: Asn-34, Asn-43, and Asn-75. 5 LRR repeats span residues 54-75 (STKNLDLSFNPLKILRSYSFTN), 78-99 (QLQWLDLSRCEIETIEDKAWHG), 102-123 (QLSTLVLTGNPIKSFSPGSFSG), 126-147 (NLENLVAVETKMTSLEGFHIGQ), and 150-171 (SLKKLNVAHNLIHSFKLPEYFS). Asn-172 is a glycosylation site (N-linked (GlcNAc...) asparagine). LRR repeat units follow at residues 175 to 198 (NLEHVDLSYNYIQTISVKDLQFLR), 204 to 224 (NLSLDLSLNPIDSIQAQAFQG), and 226 to 247 (RLHELTLRSNFNSSNVLKMCLQ). Residues Asn-204, Asn-237, Asn-248, Asn-281, and Asn-307 are each glycosylated (N-linked (GlcNAc...) asparagine). Cysteines 280 and 304 form a disulfide. The LRR 9 repeat unit spans residues 372–381 (SLRYLDLSRN). Cys-388 and Cys-389 are oxidised to a cystine. LRR repeat units follow at residues 398–420 (NLKYLDLSFNGVILMSANFMGLE), 421–442 (ELEYLDFQHSTLKKVTEFSVFL), 446–467 (KLLYLDISYTNTKIDFDGIFLG), and 470–491 (SLNTLKMAGNSFKDNTLSNVFT). Asn-492, Asn-495, and Asn-524 each carry an N-linked (GlcNAc...) asparagine glycan. 3 LRR repeats span residues 495 to 516 (NLTFLDLSKCQLEQISRGVFDT), 519 to 540 (RLQLLNMSHNNLLFLDPSHYKQ), and 543 to 564 (SLRTLDCSFNRIETSKGILQHF). N-linked (GlcNAc...) asparagine glycosylation is found at Asn-572 and Asn-575. The 52-residue stretch at 576–627 (NSVACICEYQNFLQWVKDQKMFLVNVEQMKCASPIDMKASLVLDFTNSTCYI) folds into the LRRCT domain. 2 disulfide bridges follow: Cys-580–Cys-606 and Cys-582–Cys-625. A glycan (N-linked (GlcNAc...) asparagine) is linked at Asn-622. Residues 639 to 659 (VLVVATVAFLIYHFYFHLILI) traverse the membrane as a helical segment. Residues 660 to 835 (AGCKKYSRGE…EEEQEATTLT (176 aa)) lie on the Cytoplasmic side of the membrane. One can recognise a TIR domain in the interval 670–813 (SIYDAFVIYS…IFWRRLKKAL (144 aa)).

This sequence belongs to the Toll-like receptor family. As to quaternary structure, belongs to the lipopolysaccharide (LPS) receptor, a multi-protein complex containing at least CD14, LY96 and TLR4. Binding to bacterial LPS leads to homodimerization. Interacts with LY96 via the extracellular domain. Interacts with MYD88 and TIRAP via their respective TIR domains. Interacts with TICAM2. Interacts with NOX4. Interacts with CNPY3 and HSP90B1; this interaction is required for proper folding in the endoplasmic reticulum. Interacts with MAP3K21; this interaction leads to negative regulation of TLR4 signaling. Interacts with CD36, following CD36 stimulation by oxLDL or amyloid-beta 42, and forms a heterodimer with TLR6. The trimeric complex is internalized and triggers inflammatory response. LYN kinase activity facilitates TLR4-TLR6 heterodimerization and signal initiation. Interacts with TICAM1 in response to LPS in a WDFY1-dependent manner. Interacts with WDFY1 in response to LPS. Interacts with SMPDL3B. Interacts with CEACAM1; upon lipopolysaccharide stimulation, forms a complex including TLR4 and the phosphorylated form of SYK and CEACAM1, which in turn, recruits PTPN6 that dephosphorylates SYK, reducing the production of reactive oxygen species (ROS) and lysosome disruption, which in turn, reduces the activity of the inflammasome. Interacts with RFTN1; the interaction occurs in response to lipopolysaccharide stimulation. Interacts with SCIMP; the interaction occurs in response to lipopolysaccharide stimulation and is enhanced by phosphorylation of SCIMP by LYN. This interaction facilitates the phosphorylation of TLR4 by LYN which elicits a selective cytokine response in macrophages. Interacts with TRAF3IP3. Interacts with TREM1; this interaction enhances TLR4-mediated inflammatory response. Interacts with ZG16B/PAUF. Interacts with CD82; this interaction inhibits TLR4-mediated signaling pathway. Phosphorylated on tyrosine residues by LYN after binding lipopolysaccharide. Post-translationally, ubiquitinated by RNF128 via 'Lys-28'-linked polyubiquitin chains, leading to proteasomal degradation.

Its subcellular location is the cell membrane. The protein localises to the early endosome. The protein resides in the cell projection. It is found in the ruffle. Its function is as follows. Transmembrane receptor that functions as a pattern recognition receptor recognizing pathogen- and damage-associated molecular patterns (PAMPs and DAMPs) to induce innate immune responses via downstream signaling pathways. At the plasma membrane, cooperates with LY96 to mediate the innate immune response to bacterial lipopolysaccharide (LPS). Also involved in LPS-independent inflammatory responses triggered by free fatty acids, such as palmitate, and Ni(2+). Mechanistically, acts via MYD88, TIRAP and TRAF6, leading to NF-kappa-B activation, cytokine secretion and the inflammatory response. Alternatively, CD14-mediated TLR4 internalization via endocytosis is associated with the initiation of a MYD88-independent signaling via the TICAM1-TBK1-IRF3 axis leading to type I interferon production. In addition to the secretion of proinflammatory cytokines, initiates the activation of NLRP3 inflammasome and formation of a positive feedback loop between autophagy and NF-kappa-B signaling cascade. In complex with TLR6, promotes inflammation in monocytes/macrophages by associating with TLR6 and the receptor CD86. Upon ligand binding, such as oxLDL or amyloid-beta 42, the TLR4:TLR6 complex is internalized and triggers inflammatory response, leading to NF-kappa-B-dependent production of CXCL1, CXCL2 and CCL9 cytokines, via MYD88 signaling pathway, and CCL5 cytokine, via TICAM1 signaling pathway. In myeloid dendritic cells, vesicular stomatitis virus glycoprotein G but not LPS promotes the activation of IRF7, leading to type I IFN production in a CD14-dependent manner. This chain is Toll-like receptor 4 (Tlr4), found in Rattus norvegicus (Rat).